Consider the following 220-residue polypeptide: Eukaryotic translation initiation factor 3 subunit B (220 aa).

Residues 1 to 94 (MPEPIAFDES…LIIELDSAAA (94 aa)) are sufficient for interaction with HCR1 and TIF32. The segment at 1–220 (MPEPIAFDES…GVQAWGGERI (220 aa)) is sufficient for interaction with PIC8. One can recognise an RRM domain in the interval 37 to 120 (HFVICDGAPI…HRLAVNKLPD (84 aa)).

Belongs to the eIF-3 subunit B family. Component of the eukaryotic translation initiation factor 3 (eIF-3) complex.

The protein localises to the cytoplasm. RNA-binding component of the eukaryotic translation initiation factor 3 (eIF-3) complex, which is involved in protein synthesis of a specialized repertoire of mRNAs and, together with other initiation factors, stimulates binding of mRNA and methionyl-tRNAi to the 40S ribosome. The eIF-3 complex specifically targets and initiates translation of a subset of mRNAs involved in cell proliferation. This chain is Eukaryotic translation initiation factor 3 subunit B (TIF32), found in Pichia angusta (Yeast).